Reading from the N-terminus, the 259-residue chain is MTPTTPADFVVAIPARYASTRLPGKPLQRIGDRPMIQHVTERALLAGAREVWVATDDARIAAAIEHLPGVHVAMTGAAHLSGTDRLAECARIAGWDDQTCVVNLQGDEPFAPAAGIRAVADLLQHSGAQMATLAAPVDNAHDLFDPNVVKLVRTAGGDALYFSRAPIPWHRDSFASQRDSVPAEGQWLRHIGIYAYRAGFLQRFAAMPPGMLERIESLEQLRVMEAGYRIAVAVTPEPFPPGIDTPDDLVRAQVRVASP.

It belongs to the KdsB family.

It is found in the cytoplasm. The enzyme catalyses 3-deoxy-alpha-D-manno-oct-2-ulosonate + CTP = CMP-3-deoxy-beta-D-manno-octulosonate + diphosphate. The protein operates within nucleotide-sugar biosynthesis; CMP-3-deoxy-D-manno-octulosonate biosynthesis; CMP-3-deoxy-D-manno-octulosonate from 3-deoxy-D-manno-octulosonate and CTP: step 1/1. It participates in bacterial outer membrane biogenesis; lipopolysaccharide biosynthesis. In terms of biological role, activates KDO (a required 8-carbon sugar) for incorporation into bacterial lipopolysaccharide in Gram-negative bacteria. This is 3-deoxy-manno-octulosonate cytidylyltransferase from Xanthomonas euvesicatoria pv. vesicatoria (strain 85-10) (Xanthomonas campestris pv. vesicatoria).